The chain runs to 275 residues: Orotidine 5'-phosphate decarboxylase (275 aa).

Lysine 95 serves as the catalytic Proton donor.

It belongs to the OMP decarboxylase family. Type 2 subfamily.

It catalyses the reaction orotidine 5'-phosphate + H(+) = UMP + CO2. It functions in the pathway pyrimidine metabolism; UMP biosynthesis via de novo pathway; UMP from orotate: step 2/2. The polypeptide is Orotidine 5'-phosphate decarboxylase (Delftia acidovorans (strain DSM 14801 / SPH-1)).